Consider the following 178-residue polypeptide: Anthranilate synthase component 2 (178 aa).

The region spanning 1 to 178 is the Glutamine amidotransferase type-1 domain; that stretch reads MIVVVDCKDS…RNFVEMCHDG (178 aa). L-glutamine is bound at residue 49-51; it reads GPG. The Nucleophile; for GATase activity role is filled by Cys71. Residues Gln75 and 120–121 each bind L-glutamine; that span reads SL. Catalysis depends on for GATase activity residues His155 and Glu157.

As to quaternary structure, heterotetramer consisting of two non-identical subunits: a beta subunit (TrpG) and a large alpha subunit (TrpE).

The enzyme catalyses chorismate + L-glutamine = anthranilate + pyruvate + L-glutamate + H(+). The protein operates within amino-acid biosynthesis; L-tryptophan biosynthesis; L-tryptophan from chorismate: step 1/5. In terms of biological role, part of a heterotetrameric complex that catalyzes the two-step biosynthesis of anthranilate, an intermediate in the biosynthesis of L-tryptophan. In the first step, the glutamine-binding beta subunit (TrpG) of anthranilate synthase (AS) provides the glutamine amidotransferase activity which generates ammonia as a substrate that, along with chorismate, is used in the second step, catalyzed by the large alpha subunit of AS (TrpE) to produce anthranilate. In the absence of TrpG, TrpE can synthesize anthranilate directly from chorismate and high concentrations of ammonia. The protein is Anthranilate synthase component 2 (trpG) of Archaeoglobus fulgidus (strain ATCC 49558 / DSM 4304 / JCM 9628 / NBRC 100126 / VC-16).